A 242-amino-acid polypeptide reads, in one-letter code: Small ribosomal subunit protein eS6 (242 aa).

Residues 219–229 are compositionally biased toward basic and acidic residues; it reads EKKSEKAEEKK. Residues 219–242 form a disordered region; it reads EKKSEKAEEKKRRASSLRTQSVQA. 2 positions are modified to phosphoserine: serine 233 and serine 234.

It belongs to the eukaryotic ribosomal protein eS6 family. In terms of processing, phosphorylated.

The chain is Small ribosomal subunit protein eS6 (RPS6) from Yarrowia lipolytica (strain CLIB 122 / E 150) (Yeast).